We begin with the raw amino-acid sequence, 93 residues long: Conotoxin Mr105 (93 aa).

The N-terminal stretch at 1–22 (MQRGAVLLGVVALLVLWPQAGA) is a signal peptide. The propeptide occupies 23 to 33 (ELYDVNDPDVR).

This sequence belongs to the F superfamily. Contains 4 disulfide bonds. As to expression, expressed by the venom duct.

It is found in the secreted. This is Conotoxin Mr105 from Conus marmoreus (Marble cone).